The primary structure comprises 444 residues: MNHSRSHTLFVQAQTRIPGGVNSPVRAFRSVGGEPFFVARADGPYLFDVDGHRYIDYVGSWGPMIVGHNHPAVREAVQVAISNGLSYGAPCAAEVTMAETIARLVPSCDMVRMVNSGTEATLSAIRLARGATGRNHIVKFEGCYHGHGDSFLVKGGSGMLTLGMPSSPGVPAELSKLTITLTYNDFDAATALFEEMGHHIAAVIVEPVIGNANCIPPRPGYLQHLRTLCTQYAVLLIFDEVMTGFRVALGGAQALYGVTPDLTTFGKIIGGGMPVGAYGGCRDLMQHIAPAGPIYQAGTLSGNPVAMAAGLAMLELIQAPDFYTHLSNAAAALCTGLQQAASQAGIAMTTQQIGGMFGLFFTDQQVETYAQATACNTDRFNRFFHAMLQRGVFFAPSAYEAGFISSAHSPDIIEATLEAARAAFQTIANEAAILSESEAPLKMP.

Lys267 is modified (N6-(pyridoxal phosphate)lysine).

It belongs to the class-III pyridoxal-phosphate-dependent aminotransferase family. HemL subfamily. Homodimer. Requires pyridoxal 5'-phosphate as cofactor.

It is found in the cytoplasm. The catalysed reaction is (S)-4-amino-5-oxopentanoate = 5-aminolevulinate. It functions in the pathway porphyrin-containing compound metabolism; protoporphyrin-IX biosynthesis; 5-aminolevulinate from L-glutamyl-tRNA(Glu): step 2/2. The sequence is that of Glutamate-1-semialdehyde 2,1-aminomutase from Xylella fastidiosa (strain 9a5c).